Reading from the N-terminus, the 64-residue chain is UPF0434 protein BOV_A0835 (64 aa).

Belongs to the UPF0434 family.

The chain is UPF0434 protein BOV_A0835 from Brucella ovis (strain ATCC 25840 / 63/290 / NCTC 10512).